We begin with the raw amino-acid sequence, 327 residues long: S-adenosylmethionine/S-adenosylhomocysteine transporter (327 aa).

10 helical membrane-spanning segments follow: residues 22–42, 53–73, 85–105, 114–134, 143–163, 165–185, 202–222, 240–260, 271–291, and 294–314; these read CDMA…SFAL, LFVT…LLLC, IMPI…LEFI, TACF…YVQL, LGGL…GGSE, VAEW…ATCL, SLSM…LSLI, LFLQ…YNLF, FLSF…WLLL, and SFPP…RLIY. The 124-residue stretch at 34–157 folds into the EamA 1 domain; the sequence is FIWSSSFALS…LGLVSYLVYL (124 aa). One can recognise an EamA 2 domain in the interval 189–313; the sequence is GWTLLRKLGR…GFMVLGCRLI (125 aa).

It belongs to the drug/metabolite transporter (DMT) superfamily. 10 TMS drug/metabolite exporter (DME) (TC 2.A.7.3) family.

It localises to the cell membrane. Transports S-adenosylmethionine (SAM) and S-adenosylhomocysteine (SAH). Allows bacteria to acquire SAM from the eukaryotic host cell and to likely remove the toxic by-product SAH. The chain is S-adenosylmethionine/S-adenosylhomocysteine transporter from Chlamydia trachomatis serovar D (strain ATCC VR-885 / DSM 19411 / UW-3/Cx).